A 269-amino-acid chain; its full sequence is Energy-coupling factor transporter ATP-binding protein EcfA1 (269 aa).

The 235-residue stretch at 8–242 (IVFKNVSFQY…AEGLTTIGLD (235 aa)) folds into the ABC transporter domain. 42–49 (GHNGSGKS) serves as a coordination point for ATP.

The protein belongs to the ABC transporter superfamily. Energy-coupling factor EcfA family. In terms of assembly, forms a stable energy-coupling factor (ECF) transporter complex composed of 2 membrane-embedded substrate-binding proteins (S component), 2 ATP-binding proteins (A component) and 2 transmembrane proteins (T component).

The protein resides in the cell membrane. Its function is as follows. ATP-binding (A) component of a common energy-coupling factor (ECF) ABC-transporter complex. Unlike classic ABC transporters this ECF transporter provides the energy necessary to transport a number of different substrates. The sequence is that of Energy-coupling factor transporter ATP-binding protein EcfA1 from Staphylococcus aureus (strain bovine RF122 / ET3-1).